The primary structure comprises 469 residues: 3-isopropylmalate dehydratase large subunit (469 aa).

Residues cysteine 350, cysteine 410, and cysteine 413 each coordinate [4Fe-4S] cluster.

This sequence belongs to the aconitase/IPM isomerase family. LeuC type 1 subfamily. Heterodimer of LeuC and LeuD. It depends on [4Fe-4S] cluster as a cofactor.

It catalyses the reaction (2R,3S)-3-isopropylmalate = (2S)-2-isopropylmalate. Its pathway is amino-acid biosynthesis; L-leucine biosynthesis; L-leucine from 3-methyl-2-oxobutanoate: step 2/4. Catalyzes the isomerization between 2-isopropylmalate and 3-isopropylmalate, via the formation of 2-isopropylmaleate. The protein is 3-isopropylmalate dehydratase large subunit of Brucella melitensis biotype 2 (strain ATCC 23457).